The primary structure comprises 336 residues: G patch domain and ankyrin repeat-containing protein 1 homolog (336 aa).

ANK repeat units follow at residues 123–152 (FGWTALMMAACEGATEAVSWLVQRGVQVET) and 156–185 (SGNTALKLAQRKGHLDVVHLLESLPILEET). One can recognise a G-patch domain in the interval 240–286 (AKNRGLQLMVKQGWDQEHGLGPSQSGRLYPVKTVLRKQRTGLGIEQQ).

The sequence is that of G patch domain and ankyrin repeat-containing protein 1 homolog from Drosophila melanogaster (Fruit fly).